A 132-amino-acid chain; its full sequence is Histone H2A.2 (132 aa).

The protein belongs to the histone H2A family. In terms of assembly, the nucleosome is a histone octamer containing two molecules each of H2A, H2B, H3 and H4 assembled in one H3-H4 heterotetramer and two H2A-H2B heterodimers. The octamer wraps approximately 147 bp of DNA.

Its subcellular location is the nucleus. It localises to the chromosome. Functionally, core component of nucleosome. Nucleosomes wrap and compact DNA into chromatin, limiting DNA accessibility to the cellular machineries which require DNA as a template. Histones thereby play a central role in transcription regulation, DNA repair, DNA replication and chromosomal stability. DNA accessibility is regulated via a complex set of post-translational modifications of histones, also called histone code, and nucleosome remodeling. This is Histone H2A.2 from Leishmania infantum.